The sequence spans 276 residues: uncharacterized protein (276 aa).

This is an uncharacterized protein from Acanthamoeba polyphaga mimivirus (APMV).